Reading from the N-terminus, the 358-residue chain is tRNA-specific 2-thiouridylase MnmA (358 aa).

ATP-binding positions include Ala-7–Ser-14 and Met-33. Cys-102 acts as the Nucleophile in catalysis. A disulfide bridge links Cys-102 with Cys-199. Gly-126 serves as a coordination point for ATP. Residues Lys-149–Gln-151 form an interaction with tRNA region. Catalysis depends on Cys-199, which acts as the Cysteine persulfide intermediate. The segment at Arg-305–Tyr-306 is interaction with tRNA.

This sequence belongs to the MnmA/TRMU family.

It is found in the cytoplasm. The catalysed reaction is S-sulfanyl-L-cysteinyl-[protein] + uridine(34) in tRNA + AH2 + ATP = 2-thiouridine(34) in tRNA + L-cysteinyl-[protein] + A + AMP + diphosphate + H(+). Catalyzes the 2-thiolation of uridine at the wobble position (U34) of tRNA, leading to the formation of s(2)U34. In Halothermothrix orenii (strain H 168 / OCM 544 / DSM 9562), this protein is tRNA-specific 2-thiouridylase MnmA.